Consider the following 205-residue polypeptide: Small ribosomal subunit protein uS4 (205 aa).

The span at 1–16 shows a compositional bias: basic and acidic residues; it reads MSKRESSKYKIDRRMG. The tract at residues 1–46 is disordered; the sequence is MSKRESSKYKIDRRMGENIWGRPKSPVNRREYGPGQHGQRRKGKLS. The S4 RNA-binding domain maps to 94–157; the sequence is SRLDAIVYRA…KQLVIVLEAV (64 aa).

The protein belongs to the universal ribosomal protein uS4 family. In terms of assembly, part of the 30S ribosomal subunit. Contacts protein S5. The interaction surface between S4 and S5 is involved in control of translational fidelity.

Functionally, one of the primary rRNA binding proteins, it binds directly to 16S rRNA where it nucleates assembly of the body of the 30S subunit. With S5 and S12 plays an important role in translational accuracy. This is Small ribosomal subunit protein uS4 from Rhizobium leguminosarum bv. trifolii (strain WSM2304).